The following is a 175-amino-acid chain: Vitamin K epoxide reductase complex subunit 1-like protein 1 (175 aa).

The Cytoplasmic segment spans residues 1–12 (MAAPVLRVSTPR). The helical transmembrane segment at 13-35 (WERIARVLVCLLGILLSLYAFHV) threads the bilayer. Topologically, residues 36-86 (EREHARDPSYKALCDVSSSISCSKVFGSRWGRGFGLLGSIFGNDSALNQPN) are lumenal. An intrachain disulfide couples C49 to C57. N86 contributes to the (S)-warfarin binding site. A helical membrane pass occupies residues 87-101 (SVYGIVFYAFQLLLG). Residues 102 to 106 (MTVSA) lie on the Cytoplasmic side of the membrane. Residues 107-134 (MAALILMTTSIMSVVGSLYLGYILYFVL) form a helical membrane-spanning segment. The Lumenal portion of the chain corresponds to 135-137 (KDL). C138 and C141 form a disulfide bridge. Residues 138 to 159 (CVICVTTYALNFILFVLNYKRL) form a helical membrane-spanning segment. Phylloquinone contacts are provided by C141 and Y145. (S)-warfarin is bound at residue Y145. At 160 to 175 (VYLNEAWKQKLQAKQD) the chain is on the cytoplasmic side.

Belongs to the VKOR family.

It is found in the endoplasmic reticulum membrane. The catalysed reaction is phylloquinone + [protein]-disulfide + H2O = 2,3-epoxyphylloquinone + [protein]-dithiol. It catalyses the reaction phylloquinol + [protein]-disulfide = phylloquinone + [protein]-dithiol. With respect to regulation, inhibited by warfarin (coumadin). Warfarin locks VKORC1 in both redox states into the closed conformation. Involved in vitamin K metabolism. Can reduce inactive vitamin K 2,3-epoxide to active vitamin K, and may contribute to vitamin K-mediated protection against oxidative stress. Plays a role in vitamin K-dependent gamma-carboxylation of Glu residues in target proteins. The sequence is that of Vitamin K epoxide reductase complex subunit 1-like protein 1 (vkorc1l1) from Takifugu rubripes (Japanese pufferfish).